Here is a 423-residue protein sequence, read N- to C-terminus: Gamma-glutamyl phosphate reductase 2 (423 aa).

The protein belongs to the gamma-glutamyl phosphate reductase family.

The protein resides in the cytoplasm. It catalyses the reaction L-glutamate 5-semialdehyde + phosphate + NADP(+) = L-glutamyl 5-phosphate + NADPH + H(+). The protein operates within amino-acid biosynthesis; L-proline biosynthesis; L-glutamate 5-semialdehyde from L-glutamate: step 2/2. Catalyzes the NADPH-dependent reduction of L-glutamate 5-phosphate into L-glutamate 5-semialdehyde and phosphate. The product spontaneously undergoes cyclization to form 1-pyrroline-5-carboxylate. This is Gamma-glutamyl phosphate reductase 2 from Bacillus licheniformis (strain ATCC 14580 / DSM 13 / JCM 2505 / CCUG 7422 / NBRC 12200 / NCIMB 9375 / NCTC 10341 / NRRL NRS-1264 / Gibson 46).